The sequence spans 148 residues: Calmodulin-related protein 97A (148 aa).

EF-hand domains lie at 7-42 (EQIA…LGQN), 43-78 (PTEA…QMRE), 80-115 (DTEE…LGEK), and 116-148 (VTDE…ISQK). Ca(2+) is bound by residues aspartate 20, threonine 24, lysine 26, glutamate 31, asparagine 58, asparagine 60, glutamine 62, glutamate 67, aspartate 93, aspartate 95, aspartate 97, glutamate 104, aspartate 129, aspartate 131, aspartate 133, methionine 135, and glutamate 140.

It belongs to the calmodulin family.

In terms of biological role, may be involved in calcium-mediated signal transduction. The chain is Calmodulin-related protein 97A (Acam) from Drosophila melanogaster (Fruit fly).